The chain runs to 227 residues: Cytochrome c oxidase subunit 2 (227 aa).

Residues 1–14 (MAYPFQLGLQDATS) lie on the Mitochondrial intermembrane side of the membrane. A helical membrane pass occupies residues 15–45 (PIMEELTNFHDHTLMIVFLISSLVLYIISLM). Residues 46-59 (LTTKLTHTSTMDAQ) are Mitochondrial matrix-facing. Residues 60–87 (EVETIWTILPAAILILIALPSLRILYMM) traverse the membrane as a helical segment. Residues 88–227 (DEINNPVLTV…YFENWSTSMI (140 aa)) are Mitochondrial intermembrane-facing. Cu cation is bound by residues histidine 161, cysteine 196, glutamate 198, cysteine 200, histidine 204, and methionine 207. Glutamate 198 lines the Mg(2+) pocket. Tyrosine 218 carries the post-translational modification Phosphotyrosine.

Belongs to the cytochrome c oxidase subunit 2 family. In terms of assembly, component of the cytochrome c oxidase (complex IV, CIV), a multisubunit enzyme composed of 14 subunits. The complex is composed of a catalytic core of 3 subunits MT-CO1, MT-CO2 and MT-CO3, encoded in the mitochondrial DNA, and 11 supernumerary subunits COX4I, COX5A, COX5B, COX6A, COX6B, COX6C, COX7A, COX7B, COX7C, COX8 and NDUFA4, which are encoded in the nuclear genome. The complex exists as a monomer or a dimer and forms supercomplexes (SCs) in the inner mitochondrial membrane with NADH-ubiquinone oxidoreductase (complex I, CI) and ubiquinol-cytochrome c oxidoreductase (cytochrome b-c1 complex, complex III, CIII), resulting in different assemblies (supercomplex SCI(1)III(2)IV(1) and megacomplex MCI(2)III(2)IV(2)). Found in a complex with TMEM177, COA6, COX18, COX20, SCO1 and SCO2. Interacts with TMEM177 in a COX20-dependent manner. Interacts with COX20. Interacts with COX16. Requires Cu cation as cofactor.

It is found in the mitochondrion inner membrane. It carries out the reaction 4 Fe(II)-[cytochrome c] + O2 + 8 H(+)(in) = 4 Fe(III)-[cytochrome c] + 2 H2O + 4 H(+)(out). Its function is as follows. Component of the cytochrome c oxidase, the last enzyme in the mitochondrial electron transport chain which drives oxidative phosphorylation. The respiratory chain contains 3 multisubunit complexes succinate dehydrogenase (complex II, CII), ubiquinol-cytochrome c oxidoreductase (cytochrome b-c1 complex, complex III, CIII) and cytochrome c oxidase (complex IV, CIV), that cooperate to transfer electrons derived from NADH and succinate to molecular oxygen, creating an electrochemical gradient over the inner membrane that drives transmembrane transport and the ATP synthase. Cytochrome c oxidase is the component of the respiratory chain that catalyzes the reduction of oxygen to water. Electrons originating from reduced cytochrome c in the intermembrane space (IMS) are transferred via the dinuclear copper A center (CU(A)) of subunit 2 and heme A of subunit 1 to the active site in subunit 1, a binuclear center (BNC) formed by heme A3 and copper B (CU(B)). The BNC reduces molecular oxygen to 2 water molecules using 4 electrons from cytochrome c in the IMS and 4 protons from the mitochondrial matrix. The polypeptide is Cytochrome c oxidase subunit 2 (MT-CO2) (Arvicanthis somalicus (Neumann's grass rat)).